The following is a 289-amino-acid chain: Palmitoyl-protein thioesterase 3 (289 aa).

Residues 1–20 (MRILSSLILLIALAIALVSA) form the signal peptide. Residue serine 97 is part of the active site. Asparagine 189 and asparagine 195 each carry an N-linked (GlcNAc...) asparagine glycan. Residues aspartate 210 and histidine 266 contribute to the active site. N-linked (GlcNAc...) asparagine glycosylation is present at asparagine 281.

Belongs to the palmitoyl-protein thioesterase family.

Its subcellular location is the lysosome. It catalyses the reaction S-hexadecanoyl-L-cysteinyl-[protein] + H2O = L-cysteinyl-[protein] + hexadecanoate + H(+). Removes thioester-linked fatty acyl groups such as palmitate from modified cysteine residues in proteins or peptides during lysosomal degradation. The polypeptide is Palmitoyl-protein thioesterase 3 (ppt3) (Dictyostelium discoideum (Social amoeba)).